A 240-amino-acid chain; its full sequence is Cytochrome c-551 (240 aa).

Heme c is bound by residues cysteine 41, cysteine 44, histidine 45, cysteine 128, cysteine 132, and histidine 133.

Post-translationally, binds 2 heme c groups per subunit.

The polypeptide is Cytochrome c-551 (Rhodocyclus tenuis (Rhodospirillum tenue)).